Here is a 231-residue protein sequence, read N- to C-terminus: Putative N-acetylmannosamine-6-phosphate 2-epimerase (231 aa).

Belongs to the NanE family.

It catalyses the reaction an N-acyl-D-glucosamine 6-phosphate = an N-acyl-D-mannosamine 6-phosphate. The protein operates within amino-sugar metabolism; N-acetylneuraminate degradation; D-fructose 6-phosphate from N-acetylneuraminate: step 3/5. Functionally, converts N-acetylmannosamine-6-phosphate (ManNAc-6-P) to N-acetylglucosamine-6-phosphate (GlcNAc-6-P). This chain is Putative N-acetylmannosamine-6-phosphate 2-epimerase, found in Glaesserella parasuis serovar 5 (strain SH0165) (Haemophilus parasuis).